A 350-amino-acid chain; its full sequence is Ceramide synthase 1 (350 aa).

Position 2 is an N-acetylalanine (Ala-2). The next 6 helical transmembrane spans lie at 53 to 73, 103 to 123, 148 to 168, 176 to 196, 239 to 259, and 287 to 307; these read AHLA…WTAL, AWKF…LFGT, IAAA…ATLY, SVVM…SYAF, AADL…LYWF, and LLLL…AFAA. The TLC domain occupies 97–311; that stretch reads AKMPESAWKF…IVAFAAKVLT (215 aa).

Acetylated. Deacetylation by SIRT3 increases enzyme activity and promotes mitochondrial ceramide accumulation.

It localises to the endoplasmic reticulum membrane. The catalysed reaction is a sphingoid base + octadecanoyl-CoA = an N-octadecanoyl-sphingoid base + CoA + H(+). It catalyses the reaction sphinganine + octadecanoyl-CoA = N-(octadecanoyl)-sphinganine + CoA + H(+). It carries out the reaction hexadecasphinganine + octadecanoyl-CoA = N-octadecanoylhexadecasphinganine + CoA + H(+). The enzyme catalyses sphing-4-enine + octadecanoyl-CoA = N-octadecanoylsphing-4-enine + CoA + H(+). The catalysed reaction is heptadecasphing-4-enine + octadecanoyl-CoA = N-octadecanoyl-heptadecasphing-4-enine + CoA + H(+). It catalyses the reaction 2-hydroxyoctadecanoyl-CoA + sphinganine = N-(2-hydroxyoctadecanoyl)-sphinganine + CoA + H(+). It carries out the reaction eicosanoyl-CoA + sphinganine = N-eicosanoylsphinganine + CoA + H(+). Its pathway is lipid metabolism; sphingolipid metabolism. Its activity is regulated as follows. Inhibited by fumonisin B1. Ceramide synthase that catalyzes the transfer of the acyl chain from acyl-CoA to a sphingoid base, with high selectivity toward stearoyl-CoA (octadecanoyl-CoA; C18:0-CoA). N-acylates sphinganine and sphingosine bases to form dihydroceramides and ceramides in de novo synthesis and salvage pathways, respectively. Plays a predominant role in skeletal muscle in regulating C18 ceramide and dihydroceramide levels with an impact on whole-body glucose metabolism and insulin sensitivity. Protects from diet-induced obesity by suppressing the uptake of glucose in multiple organs in a FGF21-dependent way. Generates C18 ceramides in the brain, playing a critical role in cerebellar development and Purkinje cell function. In response to cellular stress mediates mitophagy, a known defense mechanism against cell transformation and aging. Upon mitochondria fission, generates C18 ceramides that anchor lipidated MAP1LC3B/LC3B-II autophagolysosomes to outer mitochondrial membranes to eliminate damaged mitochondria. The protein is Ceramide synthase 1 of Homo sapiens (Human).